A 196-amino-acid chain; its full sequence is uncharacterized protein (196 aa).

Belongs to the CDP-alcohol phosphatidyltransferase class-I family.

This is an uncharacterized protein from Aquifex aeolicus (strain VF5).